The chain runs to 349 residues: DNA replication and repair protein RecF (349 aa).

30–37 (GKNGSGKT) is a binding site for ATP.

This sequence belongs to the RecF family.

Its subcellular location is the cytoplasm. Its function is as follows. The RecF protein is involved in DNA metabolism; it is required for DNA replication and normal SOS inducibility. RecF binds preferentially to single-stranded, linear DNA. It also seems to bind ATP. The protein is DNA replication and repair protein RecF of Francisella tularensis subsp. novicida (strain U112).